The chain runs to 294 residues: 4-hydroxybenzoate octaprenyltransferase (294 aa).

8 consecutive transmembrane segments (helical) span residues 20–42 (LLRI…ALWL), 98–118 (WEAV…VVLF), 120–140 (NTLT…YPFM), 145–165 (HLPQ…AWAA), 175–195 (WLLF…YAMV), 218–238 (AIIA…GQRA), 242–262 (SFYY…QYLA), and 274–294 (FLNN…DLAF).

It belongs to the UbiA prenyltransferase family. Requires Mg(2+) as cofactor.

The protein resides in the cell inner membrane. The catalysed reaction is all-trans-octaprenyl diphosphate + 4-hydroxybenzoate = 4-hydroxy-3-(all-trans-octaprenyl)benzoate + diphosphate. It participates in cofactor biosynthesis; ubiquinone biosynthesis. In terms of biological role, catalyzes the prenylation of para-hydroxybenzoate (PHB) with an all-trans polyprenyl group. Mediates the second step in the final reaction sequence of ubiquinone-8 (UQ-8) biosynthesis, which is the condensation of the polyisoprenoid side chain with PHB, generating the first membrane-bound Q intermediate 3-octaprenyl-4-hydroxybenzoate. This Marinobacter nauticus (strain ATCC 700491 / DSM 11845 / VT8) (Marinobacter aquaeolei) protein is 4-hydroxybenzoate octaprenyltransferase.